The chain runs to 247 residues: Sensory rhodopsin-1 (247 aa).

The Extracellular segment spans residues 1-4 (MTGA). The chain crosses the membrane as a helical span at residues 5 to 26 (VSAAYWIAAVAFLVGLGITAAL). The Cytoplasmic portion of the chain corresponds to 27 to 35 (YAKLGESED). Residues 36–57 (RGRLAALAVIPGFAGLAYAGMA) form a helical membrane-spanning segment. The Extracellular segment spans residues 58 to 71 (LGIGTVTVNGAELV). The chain crosses the membrane as a helical span at residues 72-93 (GLRYVDWIVTTPLLVGFIGYVA). Residues 94-96 (GAS) are Cytoplasmic-facing. A helical membrane pass occupies residues 97–119 (RRAIAGVMLADALMIAFGAGAVV). Over 120 to 123 (TGGT) the chain is Extracellular. Residues 124 to 151 (LKWVLFGVSSIFHVTLFAYLYVVFPRAV) traverse the membrane as a helical segment. Residues 152 to 154 (PDD) are Cytoplasmic-facing. A helical membrane pass occupies residues 155–182 (PMQRGLFSLLKNHVGLLWLAYPFVWLMG). Residues 183–190 (PAGIGFTT) are Extracellular-facing. Residues 191–223 (GVGAALTYAFLDVLAKVPYVYFFYARRQAFTDV) form a helical membrane-spanning segment. Lysine 206 carries the post-translational modification N6-(retinylidene)lysine. At 224–247 (VSAATADREDATDAVGDGAPTAAD) the chain is on the cytoplasmic side.

This sequence belongs to the archaeal/bacterial/fungal opsin family. As to quaternary structure, interacts with HTR-I.

The protein resides in the cell membrane. In terms of biological role, involved in the control of phototaxis. Mediates both photoattractant (in the orange light) and photophobic (in the near UV light) responses. The signal is then transmitted to the sensory rhodopsin I transducer (HTR-I). The sequence is that of Sensory rhodopsin-1 (sop1) from Halobacterium sp. (strain SG1).